The following is a 37-amino-acid chain: Conotoxin r11e (37 aa).

Cystine bridges form between Cys2–Cys16, Cys9–Cys21, Cys15–Cys26, and Cys20–Cys33. A 4-carboxyglutamate mark is found at Glu13 and Glu14. A 6'-bromotryptophan modification is found at Trp34.

As to expression, expressed by the venom duct.

The protein localises to the secreted. Causes hyperactivity, circular motion, convulsion, urination and death, when injected into 13- to 15-day-old mice. Causes gasping, backward swimming or swimming in a vertical direction and death, when intraperitoneally injected into goldfish. The protein is Conotoxin r11e of Conus radiatus (Rayed cone).